The sequence spans 180 residues: Insulin-like growth factor 2 (180 aa).

A signal peptide spans 1 to 24; it reads MGIPMGKSMLVLLTFLAFASCCIA. A b region spans residues 25 to 52; the sequence is AYRPSETLCGGELVDTLQFVCGDRGFYF. 3 disulfides stabilise this stretch: cysteine 33-cysteine 71, cysteine 45-cysteine 84, and cysteine 70-cysteine 75. A c region spans residues 53-64; sequence SRPASRVSRRSR. Positions 65 to 85 are a; the sequence is GIVEECCFRSCDLALLETYCA. The segment at 86–91 is d; the sequence is TPAKSE. A propeptide spans 92–180 (e peptide); sequence RDVSTPPTVL…APPEMASNRK (89 aa). O-linked (GalNAc...) threonine glycosylation is found at threonine 96, threonine 99, and threonine 163. Residues 161–180 form a disordered region; that stretch reads LPTQDPAHGGAPPEMASNRK.

It belongs to the insulin family. Interacts with MYORG; this interaction is required for IGF2 secretion. Interacts with integrins ITGAV:ITGB3 and ITGA6:ITGB4; integrin-binding is required for IGF2 signaling. Interacts with IGFBP2. In terms of processing, O-glycosylated with core 1 or possibly core 8 glycans. Thr-96 is a minor glycosylation site compared to Thr-99. Post-translationally, proteolytically processed by PCSK4, proIGF2 is cleaved at Arg-128 and Arg-92 to generate big-IGF2 and mature IGF2. As to expression, expressed in heart, placenta, lung, liver, muscle, kidney, tongue, limb, eye and pancreas.

It is found in the secreted. The insulin-like growth factors possess growth-promoting activity. Major fetal growth hormone in mammals. Plays a key role in regulating fetoplacental development. IGF2 is influenced by placental lactogen. Also involved in tissue differentiation. In adults, involved in glucose metabolism in adipose tissue, skeletal muscle and liver. Acts as a ligand for integrin which is required for IGF2 signaling. Positively regulates myogenic transcription factor MYOD1 function by facilitating the recruitment of transcriptional coactivators, thereby controlling muscle terminal differentiation. Inhibits myoblast differentiation and modulates metabolism via increasing the mitochondrial respiration rate. In terms of biological role, preptin undergoes glucose-mediated co-secretion with insulin, and acts as a physiological amplifier of glucose-mediated insulin secretion. Exhibits osteogenic properties by increasing osteoblast mitogenic activity through phosphoactivation of MAPK1 and MAPK3. The chain is Insulin-like growth factor 2 from Homo sapiens (Human).